The following is a 305-amino-acid chain: Methionyl-tRNA formyltransferase (305 aa).

110–113 (SLLP) lines the (6S)-5,6,7,8-tetrahydrofolate pocket.

It belongs to the Fmt family.

The enzyme catalyses L-methionyl-tRNA(fMet) + (6R)-10-formyltetrahydrofolate = N-formyl-L-methionyl-tRNA(fMet) + (6S)-5,6,7,8-tetrahydrofolate + H(+). Its function is as follows. Attaches a formyl group to the free amino group of methionyl-tRNA(fMet). The formyl group appears to play a dual role in the initiator identity of N-formylmethionyl-tRNA by promoting its recognition by IF2 and preventing the misappropriation of this tRNA by the elongation apparatus. The sequence is that of Methionyl-tRNA formyltransferase from Ureaplasma urealyticum serovar 10 (strain ATCC 33699 / Western).